The following is a 217-amino-acid chain: Large ribosomal subunit protein uL3 (217 aa).

The residue at position 152 (Gln-152) is an N5-methylglutamine.

Belongs to the universal ribosomal protein uL3 family. In terms of assembly, part of the 50S ribosomal subunit. Forms a cluster with proteins L14 and L19. Post-translationally, methylated by PrmB.

One of the primary rRNA binding proteins, it binds directly near the 3'-end of the 23S rRNA, where it nucleates assembly of the 50S subunit. The protein is Large ribosomal subunit protein uL3 of Blochmanniella pennsylvanica (strain BPEN).